Reading from the N-terminus, the 195-residue chain is UPF0215 protein TGAM_0348 (195 aa).

The protein belongs to the UPF0215 family.

This is UPF0215 protein TGAM_0348 from Thermococcus gammatolerans (strain DSM 15229 / JCM 11827 / EJ3).